Here is a 258-residue protein sequence, read N- to C-terminus: Ribosomal RNA small subunit methyltransferase J (258 aa).

Residues 123-124 (ER) and aspartate 177 contribute to the S-adenosyl-L-methionine site. The disordered stretch occupies residues 232-258 (IDGPKPSHSLEGKSSRYDIYPKKALKA). Basic and acidic residues predominate over residues 239–252 (HSLEGKSSRYDIYP).

The protein belongs to the methyltransferase superfamily. RsmJ family.

The protein resides in the cytoplasm. The enzyme catalyses guanosine(1516) in 16S rRNA + S-adenosyl-L-methionine = N(2)-methylguanosine(1516) in 16S rRNA + S-adenosyl-L-homocysteine + H(+). Functionally, specifically methylates the guanosine in position 1516 of 16S rRNA. The chain is Ribosomal RNA small subunit methyltransferase J from Pseudomonas putida (strain GB-1).